The chain runs to 361 residues: Outer membrane protein P2 (361 aa).

Positions 1 to 20 (MKKTLAALIVGAFAASAANA) are cleaved as a signal peptide.

This sequence belongs to the Gram-negative porin family. In terms of assembly, homotrimer.

Its subcellular location is the cell outer membrane. Forms pores that allow passive diffusion of small molecules across the outer membrane. This Haemophilus influenzae protein is Outer membrane protein P2 (ompP2).